The primary structure comprises 829 residues: Protein Jade-1 (829 aa).

Residues 1-10 (MKRSRVPSTS) are compositionally biased toward polar residues. The segment at 1–40 (MKRSRVPSTSEDSDNGSNSTSWSQHSNSKHRKQSGKRPSE) is disordered. Low complexity predominate over residues 15-26 (NGSNSTSWSQHS). Residues 196–246 (DVVCDVCQSPDGEDGNEMVFCDKCNICVHQACYGILKVPEGSWLCRTCALG) form a PHD-type 1 zinc finger. A C2HC pre-PHD-type zinc finger spans residues 248 to 282 (FPKCHLCPKKGGAMKPTRSGTKWVHVSCALWIPEV). The PHD-type 2 zinc finger occupies 306-362 (LICCLCKEKTGACIQCSAKSCRVAFHVTCGLHCGLKMNTILTEADEVKFKSFCPKHS). 3 disordered regions span residues 368–408 (EEEG…PEET), 556–651 (PPVP…RRKS), and 697–829 (ATAP…VLAS). The segment covering 374 to 390 (DRPVKVPTREDRSRNRG) has biased composition (basic and acidic residues). 3 stretches are compositionally biased toward polar residues: residues 394–405 (SASSQTRLSQNP), 570–586 (GQNS…NSYR), and 607–619 (SGDS…VMSA). Positions 622–648 (RRSEGRTRSGESHRKEEESERPLEDRR) are enriched in basic and acidic residues. The span at 697–714 (ATAPNMYSGSPRKTNASH) shows a compositional bias: polar residues. Positions 738-754 (KRSERTSAGRQTERQEA) are enriched in basic and acidic residues. Residues 762–774 (SSLKTFSTSPSSP) show a composition bias toward low complexity. The span at 782–792 (TGSENRRHLEE) shows a compositional bias: basic and acidic residues.

Belongs to the JADE family. Component of the HBO1 complex composed.

Its subcellular location is the nucleus. It localises to the chromosome. The protein resides in the cytoplasm. It is found in the cytoskeleton. The protein localises to the cilium basal body. Scaffold subunit of some HBO1 complexes, which have a histone H4 acetyltransferase activity. Plays a key role in HBO1 complex by directing KAT7/HBO1 specificity towards histone H4 acetylation (H4K5ac, H4K8ac and H4K12ac), regulating DNA replication initiation, regulating DNA replication initiation. This Danio rerio (Zebrafish) protein is Protein Jade-1 (jade1).